Consider the following 465-residue polypeptide: GTPase Der (465 aa).

EngA-type G domains lie at 3–166 and 184–358; these read FLVA…LNEF and IHFS…ACAN. GTP contacts are provided by residues 9–16, 56–60, 118–121, 190–197, 237–241, and 302–305; these read GRANVGKS, DTGGI, NKVD, GRPNVGKS, DTAGV, and NKWD. Residues 359-443 form the KH-like domain; the sequence is KKITTADATR…PIVFEFKQSE (85 aa).

This sequence belongs to the TRAFAC class TrmE-Era-EngA-EngB-Septin-like GTPase superfamily. EngA (Der) GTPase family. As to quaternary structure, associates with the 50S ribosomal subunit.

GTPase that plays an essential role in the late steps of ribosome biogenesis. This chain is GTPase Der, found in Francisella philomiragia subsp. philomiragia (strain ATCC 25017 / CCUG 19701 / FSC 153 / O#319-036).